Consider the following 326-residue polypeptide: MQTNLLKPKIISVEALTANQAKVVMEPFERGYGHTLGNALRRVLLSSMVGYAPTEVAIAGVVHEYSTLDGVQEDVVNLLLNLKGIVFKLQSRDEVTINLRKEGPGVVTAKDIDLPHDVEIMNPDHVIAHLSAGGKLDMQIKVEKGRGYVPGNVRQYNDETTKIIGRIVLDASFSPVSRVSYAVESARVEQRTDLDRLVMTIETNGVLSPEEAIRQAASILVDQLVVFAALESSEVSGDLAPSRSSMVDPMLMRPVDDLELTVRSANCLKAENIYYIGDLIQRTENELLKTPNLGRKSLNEIKDVLAARGLSLGMKLESWPPANLEK.

Residues 1–231 (MQTNLLKPKI…DQLVVFAALE (231 aa)) are alpha N-terminal domain (alpha-NTD). Residues 247-326 (VDPMLMRPVD…ESWPPANLEK (80 aa)) form an alpha C-terminal domain (alpha-CTD) region.

The protein belongs to the RNA polymerase alpha chain family. In terms of assembly, homodimer. The RNAP catalytic core consists of 2 alpha, 1 beta, 1 beta' and 1 omega subunit. When a sigma factor is associated with the core the holoenzyme is formed, which can initiate transcription.

It catalyses the reaction RNA(n) + a ribonucleoside 5'-triphosphate = RNA(n+1) + diphosphate. Functionally, DNA-dependent RNA polymerase catalyzes the transcription of DNA into RNA using the four ribonucleoside triphosphates as substrates. The protein is DNA-directed RNA polymerase subunit alpha of Polynucleobacter asymbioticus (strain DSM 18221 / CIP 109841 / QLW-P1DMWA-1) (Polynucleobacter necessarius subsp. asymbioticus).